Reading from the N-terminus, the 123-residue chain is Small ribosomal subunit protein uS13 (123 aa).

A disordered region spans residues 103–123 (TRTNARTRKGPKKTVGVRRKK). A compositionally biased stretch (basic residues) spans 105-123 (TNARTRKGPKKTVGVRRKK).

The protein belongs to the universal ribosomal protein uS13 family. In terms of assembly, part of the 30S ribosomal subunit. Forms a loose heterodimer with protein S19. Forms two bridges to the 50S subunit in the 70S ribosome.

Its function is as follows. Located at the top of the head of the 30S subunit, it contacts several helices of the 16S rRNA. In the 70S ribosome it contacts the 23S rRNA (bridge B1a) and protein L5 of the 50S subunit (bridge B1b), connecting the 2 subunits; these bridges are implicated in subunit movement. Contacts the tRNAs in the A and P-sites. The sequence is that of Small ribosomal subunit protein uS13 from Desulforudis audaxviator (strain MP104C).